A 121-amino-acid polypeptide reads, in one-letter code: Parathyroid hormone-related protein (121 aa).

A signal peptide spans 1-14 (VGVFLLSYSVPSCG). A propeptide spanning residues 15–24 (RSVEELGRRL) is cleaved from the precursor. Positions 47–58 (RFFLHHLIAEIH) are important for receptor binding. The segment at 61–121 (EIRATSEVSP…PGKKKKGKPG (61 aa)) is disordered. Polar residues predominate over residues 66-80 (SEVSPNSKPAPNTKN). A Nuclear localization signal motif is present at residues 98 to 119 (TNKVETYKEQPLKTPGKKKKGK). A compositionally biased stretch (basic and acidic residues) spans 99 to 108 (NKVETYKEQP). Residues 112 to 121 (PGKKKKGKPG) show a composition bias toward basic residues.

It belongs to the parathyroid hormone family. In terms of assembly, PTHrP interacts with PTH1R (via N-terminal extracellular domain).

It is found in the secreted. The protein resides in the cytoplasm. The protein localises to the nucleus. Its function is as follows. Neuroendocrine peptide which is a critical regulator of cellular and organ growth, development, migration, differentiation and survival and of epithelial calcium ion transport. Acts by binding to its receptor, PTH1R, activating G protein-coupled receptor signaling. Regulates endochondral bone development and epithelial-mesenchymal interactions during the formation of the mammary glands and teeth. Required for skeletal homeostasis. Promotes mammary mesenchyme differentiation and bud outgrowth by modulating mesenchymal cell responsiveness to BMPs. Up-regulates BMPR1A expression in the mammary mesenchyme and this increases the sensitivity of these cells to BMPs and allows them to respond to BMP4 in a paracrine and/or autocrine fashion. BMP4 signaling in the mesenchyme, in turn, triggers epithelial outgrowth and augments MSX2 expression, which causes the mammary mesenchyme to inhibit hair follicle formation within the nipple sheath. This Ovis aries (Sheep) protein is Parathyroid hormone-related protein (PTHLH).